A 434-amino-acid polypeptide reads, in one-letter code: Rubisco accumulation factor 1.1, chloroplastic (434 aa).

Residues 1–51 (MLSLTATTLSSSIFTQSKTHGFFNTRPVYRKPFTTITSALIPASNRQAPPK) constitute a chloroplast transit peptide. Residues 65–254 (IPPKFRSLDT…KAKKAVLREL (190 aa)) form an N-terminal alpha-helix region. The C-terminal beta sheet stretch occupies residues 273–419 (VPVVRLRFGE…GMVVLVVRPP (147 aa)).

The protein belongs to the RAF family. Homodimer.

Its subcellular location is the plastid. It is found in the chloroplast. In terms of biological role, required for assembly or stability of RuBisCO. Acts at a postchaperonin step to fold and/or assemble the large subunit (rbcL) into RuBisCO. RAF1 binds first to a rbcL dimer (rbcL(2)), leading to a rbcL(8)-RAF1(4) complex formation. In the next step, RBCS displaces RAF1, thus resulting in holoenzyme formation. The chain is Rubisco accumulation factor 1.1, chloroplastic from Arabidopsis thaliana (Mouse-ear cress).